We begin with the raw amino-acid sequence, 248 residues long: Large ribosomal subunit protein uL2 (248 aa).

Residues 203-248 are disordered; the sequence is AHPAGGGHHPKGLTPAPRNAPPGRKVGHIAPRRTGRKKGASRTPTQ. Basic residues predominate over residues 227 to 242; the sequence is KVGHIAPRRTGRKKGA.

This sequence belongs to the universal ribosomal protein uL2 family. In terms of assembly, part of the 50S ribosomal subunit. Forms a bridge to the 30S subunit in the 70S ribosome.

In terms of biological role, one of the primary rRNA binding proteins. Required for association of the 30S and 50S subunits to form the 70S ribosome, for tRNA binding and peptide bond formation. It has been suggested to have peptidyltransferase activity; this is somewhat controversial. Makes several contacts with the 16S rRNA in the 70S ribosome. The sequence is that of Large ribosomal subunit protein uL2 from Thermofilum pendens (strain DSM 2475 / Hrk 5).